The primary structure comprises 397 residues: Argininosuccinate synthase (397 aa).

Position 9–17 (9–17) interacts with ATP; the sequence is AYSGGLDTS. Tyr86 serves as a coordination point for L-citrulline. Gly116 is a binding site for ATP. L-aspartate-binding residues include Thr118, Asn122, and Asp123. Asn122 is an L-citrulline binding site. L-citrulline is bound by residues Arg126, Ser174, Glu259, and Tyr271.

Belongs to the argininosuccinate synthase family. Type 1 subfamily. Homotetramer.

The protein localises to the cytoplasm. The catalysed reaction is L-citrulline + L-aspartate + ATP = 2-(N(omega)-L-arginino)succinate + AMP + diphosphate + H(+). It functions in the pathway amino-acid biosynthesis; L-arginine biosynthesis; L-arginine from L-ornithine and carbamoyl phosphate: step 2/3. The sequence is that of Argininosuccinate synthase from Lactococcus lactis subsp. cremoris (strain SK11).